A 127-amino-acid chain; its full sequence is S-adenosylmethionine decarboxylase proenzyme (127 aa).

The active-site Schiff-base intermediate with substrate; via pyruvic acid is Ser-63. Pyruvic acid (Ser); by autocatalysis is present on Ser-63. His-68 (proton acceptor; for processing activity) is an active-site residue. Cys-83 acts as the Proton donor; for catalytic activity in catalysis.

The protein belongs to the prokaryotic AdoMetDC family. Type 1 subfamily. In terms of assembly, heterotetramer of two alpha and two beta chains arranged as a dimer of alpha/beta heterodimers. Pyruvate serves as cofactor. Is synthesized initially as an inactive proenzyme. Formation of the active enzyme involves a self-maturation process in which the active site pyruvoyl group is generated from an internal serine residue via an autocatalytic post-translational modification. Two non-identical subunits are generated from the proenzyme in this reaction, and the pyruvate is formed at the N-terminus of the alpha chain, which is derived from the carboxyl end of the proenzyme. The post-translation cleavage follows an unusual pathway, termed non-hydrolytic serinolysis, in which the side chain hydroxyl group of the serine supplies its oxygen atom to form the C-terminus of the beta chain, while the remainder of the serine residue undergoes an oxidative deamination to produce ammonia and the pyruvoyl group blocking the N-terminus of the alpha chain.

The catalysed reaction is S-adenosyl-L-methionine + H(+) = S-adenosyl 3-(methylsulfanyl)propylamine + CO2. It participates in amine and polyamine biosynthesis; S-adenosylmethioninamine biosynthesis; S-adenosylmethioninamine from S-adenosyl-L-methionine: step 1/1. Catalyzes the decarboxylation of S-adenosylmethionine to S-adenosylmethioninamine (dcAdoMet), the propylamine donor required for the synthesis of the polyamines spermine and spermidine from the diamine putrescine. The chain is S-adenosylmethionine decarboxylase proenzyme from Carboxydothermus hydrogenoformans (strain ATCC BAA-161 / DSM 6008 / Z-2901).